We begin with the raw amino-acid sequence, 592 residues long: Isocitrate dehydrogenase kinase/phosphatase 1 (592 aa).

ATP is bound by residues 337–343 and K358; that span reads APGTPGM. D393 is a catalytic residue.

This sequence belongs to the AceK family.

The protein resides in the cytoplasm. It catalyses the reaction L-seryl-[isocitrate dehydrogenase] + ATP = O-phospho-L-seryl-[isocitrate dehydrogenase] + ADP + H(+). Functionally, bifunctional enzyme which can phosphorylate or dephosphorylate isocitrate dehydrogenase (IDH) on a specific serine residue. This is a regulatory mechanism which enables bacteria to bypass the Krebs cycle via the glyoxylate shunt in response to the source of carbon. When bacteria are grown on glucose, IDH is fully active and unphosphorylated, but when grown on acetate or ethanol, the activity of IDH declines drastically concomitant with its phosphorylation. The sequence is that of Isocitrate dehydrogenase kinase/phosphatase 1 from Pseudoalteromonas translucida (strain TAC 125).